The sequence spans 269 residues: Putative pyridoxine kinase (269 aa).

Position 139 (N139) interacts with ATP. Residue E142 participates in Mg(2+) binding. ATP contacts are provided by residues 176–180 (KGGGR), D189, V205, G214, and K239.

It belongs to the ThiD family.

It carries out the reaction pyridoxal + ATP = pyridoxal 5'-phosphate + ADP + H(+). Phosphorylates B6 vitamers; functions in a salvage pathway. Uses pyridoxal, pyridoxine, and pyridoxamine as substrates. This Treponema pallidum (strain Nichols) protein is Putative pyridoxine kinase (pdxK).